A 203-amino-acid chain; its full sequence is Glycerol-3-phosphate acyltransferase (203 aa).

5 consecutive transmembrane segments (helical) span residues 12–32 (ATLL…GLIL), 66–86 (TLLL…LWGV), 88–108 (AGIA…WLSF), 118–138 (IGVL…IWLA), and 159–179 (IALY…MTVI).

Belongs to the PlsY family. In terms of assembly, probably interacts with PlsX.

The protein localises to the cell inner membrane. The enzyme catalyses an acyl phosphate + sn-glycerol 3-phosphate = a 1-acyl-sn-glycero-3-phosphate + phosphate. It participates in lipid metabolism; phospholipid metabolism. In terms of biological role, catalyzes the transfer of an acyl group from acyl-phosphate (acyl-PO(4)) to glycerol-3-phosphate (G3P) to form lysophosphatidic acid (LPA). This enzyme utilizes acyl-phosphate as fatty acyl donor, but not acyl-CoA or acyl-ACP. This Sinorhizobium fredii (strain NBRC 101917 / NGR234) protein is Glycerol-3-phosphate acyltransferase.